A 160-amino-acid polypeptide reads, in one-letter code: Eukaryotic translation initiation factor 5A-1/2 (160 aa).

Over residues 1–12 the composition is skewed to basic and acidic residues; it reads MSDEEHHFESKA. The segment at 1-21 is disordered; sequence MSDEEHHFESKADAGASKTYP. Lysine 52 is subject to Hypusine.

The protein belongs to the eIF-5A family. In terms of processing, lys-52 undergoes hypusination, a unique post-translational modification that consists in the addition of a butylamino group from spermidine to lysine side chain, leading to the formation of the unusual amino acid hypusine. eIF-5As are the only known proteins to undergo this modification, which is essential for their function.

In terms of biological role, translation factor that promotes translation elongation and termination, particularly upon ribosome stalling at specific amino acid sequence contexts. Binds between the exit (E) and peptidyl (P) site of the ribosome and promotes rescue of stalled ribosome: specifically required for efficient translation of polyproline-containing peptides as well as other motifs that stall the ribosome. Acts as a ribosome quality control (RQC) cofactor by joining the RQC complex to facilitate peptidyl transfer during CAT tailing step. In Solanum tuberosum (Potato), this protein is Eukaryotic translation initiation factor 5A-1/2 (EIF5A1).